A 180-amino-acid chain; its full sequence is GTP cyclohydrolase 1 (180 aa).

The Zn(2+) site is built by cysteine 71, histidine 74, and cysteine 142.

Belongs to the GTP cyclohydrolase I family. In terms of assembly, homomer.

The catalysed reaction is GTP + H2O = 7,8-dihydroneopterin 3'-triphosphate + formate + H(+). It functions in the pathway cofactor biosynthesis; 7,8-dihydroneopterin triphosphate biosynthesis; 7,8-dihydroneopterin triphosphate from GTP: step 1/1. This Helicobacter pylori (strain Shi470) protein is GTP cyclohydrolase 1.